A 520-amino-acid chain; its full sequence is L-tyrosine:2-oxoglutarate aminotransferase amt1 (520 aa).

The protein belongs to the class-I pyridoxal-phosphate-dependent aminotransferase family. Requires pyridoxal 5'-phosphate as cofactor.

It carries out the reaction L-tyrosine + 2-oxoglutarate = 3-(4-hydroxyphenyl)pyruvate + L-glutamate. It functions in the pathway secondary metabolite biosynthesis. Functionally, an L-tyrosine:2-oxoglutarate aminotransferase (probably amt1) and atromentin synthetase nps3 catalyze consecutive steps to turn over L-tyrosine into atromentin, which represents the generic precursor molecule for the entire terphenylquinone and pulvinic acid family of pigments, which are widely distributed secondary metabolites in homobasidiomycetes. The first step catalyzed by amt1 converts L-tyrosine in to 4-hydroxyphenylpyruvate (4-HPP). Adenylation of two 4-HPP monomers by the nps3 adenylation (A) domain, covalent tethering of the monomers as a thioester and oxoester onto the nps3 thiolation (T) and thioesterase (TE) domains, respectively, and symmetric C-C-bond formation between two monomers catalyzed by the nps3 TE domain leads to atromentin. Follow-up products of atromentin in S.lacrymans include atromentic acid, xerocomic acid, isoxerocomic acid and variegatic acid. This is L-tyrosine:2-oxoglutarate aminotransferase amt1 (amt1) from Serpula lacrymans var. lacrymans (strain S7.9) (Dry rot fungus).